We begin with the raw amino-acid sequence, 91 residues long: Small membrane A-kinase anchor protein (91 aa).

G2 carries N-myristoyl glycine lipidation.

This sequence belongs to the small membrane AKAP family. Post-translationally, may be palmitoylated at Cys-3.

Its subcellular location is the cell membrane. Its function is as follows. Binds to type I regulatory subunits of protein kinase A and may anchor/target them to the plasma membrane. The sequence is that of Small membrane A-kinase anchor protein from Xenopus laevis (African clawed frog).